The chain runs to 163 residues: Large ribosomal subunit protein mL59 (163 aa).

The tract at residues 33–53 (PAGADPETHKTPYQEESPNPF) is disordered.

Belongs to the mitochondrion-specific ribosomal protein mL59 family. In terms of assembly, component of the mitochondrial large ribosomal subunit (mt-LSU). Mature N.crassa 74S mitochondrial ribosomes consist of a small (37S) and a large (54S) subunit. The 37S small subunit contains a 16S ribosomal RNA (16S mt-rRNA) and 32 different proteins. The 54S large subunit contains a 23S rRNA (23S mt-rRNA) and 42 different proteins.

It localises to the mitochondrion. Its function is as follows. Component of the mitochondrial ribosome (mitoribosome), a dedicated translation machinery responsible for the synthesis of mitochondrial genome-encoded proteins, including at least some of the essential transmembrane subunits of the mitochondrial respiratory chain. The mitoribosomes are attached to the mitochondrial inner membrane and translation products are cotranslationally integrated into the membrane. This is Large ribosomal subunit protein mL59 (mrpl25) from Neurospora crassa (strain ATCC 24698 / 74-OR23-1A / CBS 708.71 / DSM 1257 / FGSC 987).